We begin with the raw amino-acid sequence, 94 residues long: Aspartyl/glutamyl-tRNA(Asn/Gln) amidotransferase subunit C (94 aa).

It belongs to the GatC family. Heterotrimer of A, B and C subunits.

It catalyses the reaction L-glutamyl-tRNA(Gln) + L-glutamine + ATP + H2O = L-glutaminyl-tRNA(Gln) + L-glutamate + ADP + phosphate + H(+). The catalysed reaction is L-aspartyl-tRNA(Asn) + L-glutamine + ATP + H2O = L-asparaginyl-tRNA(Asn) + L-glutamate + ADP + phosphate + 2 H(+). Allows the formation of correctly charged Asn-tRNA(Asn) or Gln-tRNA(Gln) through the transamidation of misacylated Asp-tRNA(Asn) or Glu-tRNA(Gln) in organisms which lack either or both of asparaginyl-tRNA or glutaminyl-tRNA synthetases. The reaction takes place in the presence of glutamine and ATP through an activated phospho-Asp-tRNA(Asn) or phospho-Glu-tRNA(Gln). The protein is Aspartyl/glutamyl-tRNA(Asn/Gln) amidotransferase subunit C of Heliobacterium modesticaldum (strain ATCC 51547 / Ice1).